A 628-amino-acid chain; its full sequence is Putative serine esterase Mb1866c (628 aa).

Ser156 (acyl-ester intermediate) is an active-site residue. Residues Asp322 and His350 each act as charge relay system in the active site.

The protein belongs to the CocE/NonD hydrolase family.

The chain is Putative serine esterase Mb1866c from Mycobacterium bovis (strain ATCC BAA-935 / AF2122/97).